A 268-amino-acid polypeptide reads, in one-letter code: Ribosomal RNA small subunit methyltransferase A (268 aa).

6 residues coordinate S-adenosyl-L-methionine: asparagine 18, leucine 20, glycine 45, glutamate 66, aspartate 91, and asparagine 112.

It belongs to the class I-like SAM-binding methyltransferase superfamily. rRNA adenine N(6)-methyltransferase family. RsmA subfamily.

The protein resides in the cytoplasm. The catalysed reaction is adenosine(1518)/adenosine(1519) in 16S rRNA + 4 S-adenosyl-L-methionine = N(6)-dimethyladenosine(1518)/N(6)-dimethyladenosine(1519) in 16S rRNA + 4 S-adenosyl-L-homocysteine + 4 H(+). Functionally, specifically dimethylates two adjacent adenosines (A1518 and A1519) in the loop of a conserved hairpin near the 3'-end of 16S rRNA in the 30S particle. May play a critical role in biogenesis of 30S subunits. The polypeptide is Ribosomal RNA small subunit methyltransferase A (Shewanella baltica (strain OS185)).